We begin with the raw amino-acid sequence, 387 residues long: 2-alkyl-3-oxoalkanoate reductase (387 aa).

The Proton acceptor role is filled by Y190. K194 contributes to the NADP(+) binding site.

The protein belongs to the 3-beta-HSD family.

It carries out the reaction a (2R,3S)-2-alkyl-3-hydroxyalkanoate + NADP(+) = an (R)-2-alkyl-3-oxoalkanoate + NADPH + H(+). Functionally, involved in olefin biosynthesis. Catalyzes the reversible stereospecific NADPH-dependent reduction of 2-alkyl-3-oxoalkanoic acids to 2-alkyl-3-hydroxyalkanoic acids. The S.oneidensis oleABCD genes produce 3,6,9,12,15,19,22,25,28-hentriacontanonaene, which may aid the cells in adapting to a sudden drop in temperature. This Shewanella oneidensis (strain ATCC 700550 / JCM 31522 / CIP 106686 / LMG 19005 / NCIMB 14063 / MR-1) protein is 2-alkyl-3-oxoalkanoate reductase.